Here is a 497-residue protein sequence, read N- to C-terminus: MEGSGEQPGPQPQHPGDHRIRDGDFVVLKREDVFKAVQVQRRKKVTFEKQWFYLDNVIGHSYGTAFEVTSGGSLQPKKKREEPTAETKEAGTDNRNIVDDGKSQKLTQDDIKALKDKGIKGEEIVQQLIENSTTFRDKTEFAQDKYIKKKKKKYEAIITVVKPSTRILSIMYYAREPGKINHMRYDTLAQMLTLGNIRAGNKMIVMETCAGLVLGAMMERMGGFGSIIQLYPGGGPVRAATACFGFPKSFLSGLYEFPLNKVDSLLHGTFSAKMLSSEPKDSALVEESNGTLEEKQASEQENEDSMAEAPESNHPEDQETMETISQDPEHKGPKERGSKKDYIQEKQRRQEEQRKRHLEAAALLSERNADGLIVASRFHPTPLLLSLLDFVAPSRPFVVYCQYKEPLLECYTKLRERGGVINLRLSETWLRNYQVLPDRSHPKLLMSGGGGYLLSGFTVAMDNLKADTSLKSNASTLESHETEEPAAKKRKCPESDS.

2 disordered regions span residues 1–20 (MEGS…DHRI) and 69–100 (TSGG…IVDD). The span at 79-100 (KREEPTAETKEAGTDNRNIVDD) shows a compositional bias: basic and acidic residues. Residue 94–104 (NRNIVDDGKSQ) coordinates substrate. At threonine 107 the chain carries Phosphothreonine. Substrate contacts are provided by residues 145–154 (KYIKKKKKKY) and 175–182 (REPGKINH). A disordered region spans residues 276–354 (SSEPKDSALV…EKQRRQEEQR (79 aa)). Phosphoserine is present on residues serine 298 and serine 305. The span at 327-354 (DPEHKGPKERGSKKDYIQEKQRRQEEQR) shows a compositional bias: basic and acidic residues. Substrate-binding positions include arginine 349, arginine 377, 415-423 (RERGGVINL), and 434-441 (QVLPDRSH). Residues 472-497 (SNASTLESHETEEPAAKKRKCPESDS) are disordered. The span at 478-497 (ESHETEEPAAKKRKCPESDS) shows a compositional bias: basic and acidic residues.

It belongs to the TRM6/GCD10 family. As to quaternary structure, heterotetramer; composed of two copies of TRMT6 and two copies of TRMT61A. Expressed in brain, liver, testis and ovary.

It localises to the nucleus. Functionally, substrate-binding subunit of tRNA (adenine-N(1)-)-methyltransferase, which catalyzes the formation of N(1)-methyladenine at position 58 (m1A58) in initiator methionyl-tRNA. Together with the TRMT61A catalytic subunit, part of a mRNA N(1)-methyltransferase complex that mediates methylation of adenosine residues at the N(1) position of a small subset of mRNAs: N(1) methylation takes place in tRNA T-loop-like structures of mRNAs and is only present at low stoichiometries. The protein is tRNA (adenine(58)-N(1))-methyltransferase non-catalytic subunit TRM6 (TRMT6) of Homo sapiens (Human).